Reading from the N-terminus, the 339-residue chain is Prepilin peptidase EppA (339 aa).

A run of 10 helical transmembrane segments spans residues 3–23 (LLNV…ITDI), 27–47 (IIPH…GYYY), 48–68 (FGFN…ILSI), 75–95 (VKLF…VFYI), 99–119 (ILYL…YKIL), 125–145 (DIIP…YFIN), 146–166 (IYEI…SIFV), 180–200 (LGYL…TYFI), 204–224 (VLLT…VIYA), and 319–339 (FVPF…LAII).

This sequence belongs to the peptidase A24 family.

The protein resides in the cell membrane. Functionally, peptidase that processes the N-terminus of prepilins. This chain is Prepilin peptidase EppA, found in Methanocaldococcus jannaschii (strain ATCC 43067 / DSM 2661 / JAL-1 / JCM 10045 / NBRC 100440) (Methanococcus jannaschii).